Reading from the N-terminus, the 167-residue chain is UPF0254 protein MJ1251 (167 aa).

It belongs to the UPF0254 family.

This chain is UPF0254 protein MJ1251, found in Methanocaldococcus jannaschii (strain ATCC 43067 / DSM 2661 / JAL-1 / JCM 10045 / NBRC 100440) (Methanococcus jannaschii).